The primary structure comprises 329 residues: UDP-2,3-diacylglucosamine pyrophosphatase LpxG (329 aa).

The chain crosses the membrane as a helical span at residues 2–24; it reads FVSVGITASLTTILAAPVLTWVW. A divalent metal cation contacts are provided by Asp59, His61, Asp91, Asn123, His257, and His259.

Belongs to the metallophosphoesterase superfamily. LpxG family. The cofactor is Mn(2+).

It localises to the cell inner membrane. The catalysed reaction is UDP-2,3-diacyl-alpha-D-glucosamine + H2O = 2,3-diacyl-alpha-D-glucosaminyl 1-phosphate + UMP + 2 H(+). It functions in the pathway glycolipid biosynthesis; lipid IV(A) biosynthesis. Its function is as follows. Hydrolyzes the pyrophosphate bond of UDP-2,3-diacylglucosamine to form 2,3-diacylglucosamine 1-phosphate (lipid X) and UMP by catalyzing the attack of water at the alpha-P atom. Involved in the biosynthesis of lipid A, a phosphorylated glycolipid that anchors the lipooligosaccharide (LOS) to the outer membrane of the cell. Can functionally complement lpxH deficiency in E.coli. Overexpression of LpxG results in toxic accumulation of lipid X and profoundly reduces the infectivity of C.trachomatis. Can utilize UDP-2-N,3-O-bis((3R)-3-hydroxytetradecanoyl)-alpha-D-glucosamine as substrate in vitro, but the substrate is likely UDP-2-N-((3R)-3-hydroxyicosanoyl),3-O-(tetradecanoyl)-alpha-D-glucosamine in vivo. This chain is UDP-2,3-diacylglucosamine pyrophosphatase LpxG, found in Chlamydia trachomatis serovar D (strain ATCC VR-885 / DSM 19411 / UW-3/Cx).